The chain runs to 353 residues: Draxin-B (353 aa).

Positions 1 to 21 (MASSWCLPLALLVSNLAVSHS) are cleaved as a signal peptide. 3 disordered regions span residues 23-183 (EPSS…KEGS), 198-222 (TVMS…RGKV), and 246-268 (VDAW…SGNV). Positions 138-167 (GPHKGKAQGHGHHFDHRRHGGRRDKGRHTK) are enriched in basic residues. Positions 252 to 261 (SRKKDKRRSK) are enriched in basic residues. N262 and N267 each carry an N-linked (GlcNAc...) asparagine glycan.

The protein belongs to the draxin family.

Its subcellular location is the secreted. Its function is as follows. Chemorepulsive axon guidance protein required for the development of spinal cord and forebrain commissures. Acts as a chemorepulsive guidance protein for commissural axons during development. Able to inhibit or repel neurite outgrowth from dorsal spinal cord. The polypeptide is Draxin-B (draxin-B) (Salmo salar (Atlantic salmon)).